A 304-amino-acid chain; its full sequence is uncharacterized protein (304 aa).

This is an uncharacterized protein from Methanocaldococcus jannaschii (strain ATCC 43067 / DSM 2661 / JAL-1 / JCM 10045 / NBRC 100440) (Methanococcus jannaschii).